The primary structure comprises 296 residues: Complex I intermediate-associated protein 30, mitochondrial (296 aa).

The N-terminal 29 residues, 1-29, are a transit peptide targeting the mitochondrion; that stretch reads MNSLLRQGLRLGCCLPAVQQQIHTTAVHR.

Belongs to the CIA30 family. In terms of assembly, associates with mitochondrial complex I assembly intermediates during its biogenesis.

It is found in the mitochondrion. Chaperone protein involved in the assembly of the mitochondrial NADH:ubiquinone oxidoreductase complex (complex I). The chain is Complex I intermediate-associated protein 30, mitochondrial from Drosophila melanogaster (Fruit fly).